Reading from the N-terminus, the 216-residue chain is Protein-L-isoaspartate O-methyltransferase (216 aa).

The active site involves Ser63.

The protein belongs to the methyltransferase superfamily. L-isoaspartyl/D-aspartyl protein methyltransferase family.

It is found in the cytoplasm. The catalysed reaction is [protein]-L-isoaspartate + S-adenosyl-L-methionine = [protein]-L-isoaspartate alpha-methyl ester + S-adenosyl-L-homocysteine. Catalyzes the methyl esterification of L-isoaspartyl residues in peptides and proteins that result from spontaneous decomposition of normal L-aspartyl and L-asparaginyl residues. It plays a role in the repair and/or degradation of damaged proteins. The polypeptide is Protein-L-isoaspartate O-methyltransferase (Rhodopseudomonas palustris (strain BisB18)).